Consider the following 255-residue polypeptide: MSLAVRVIPCLDVDAGRVVKGVNFLDLRDAGDPVELAAAYDRAGADELTFLDVTASASDRGTMVDVVRRTAETVFIPLTVGGGIRRVGDVDTLLRAGADKVGVNTAAIVRPELIAEVADRFGRQVLVLSLDVRRAGPGTTTSGFEVTTHGGRRGTGIDAVDWARRGAELGAGEILLNSMDADGTKTGFDLDLIRAVRSVVDVPVVASGGAGAAGHFPPAIGAGADAVLAASVFHFGELTVGEVKDALRGKGHPVR.

Active-site residues include Asp-12 and Asp-131.

Belongs to the HisA/HisF family. Heterodimer of HisH and HisF.

Its subcellular location is the cytoplasm. It catalyses the reaction 5-[(5-phospho-1-deoxy-D-ribulos-1-ylimino)methylamino]-1-(5-phospho-beta-D-ribosyl)imidazole-4-carboxamide + L-glutamine = D-erythro-1-(imidazol-4-yl)glycerol 3-phosphate + 5-amino-1-(5-phospho-beta-D-ribosyl)imidazole-4-carboxamide + L-glutamate + H(+). Its pathway is amino-acid biosynthesis; L-histidine biosynthesis; L-histidine from 5-phospho-alpha-D-ribose 1-diphosphate: step 5/9. Functionally, IGPS catalyzes the conversion of PRFAR and glutamine to IGP, AICAR and glutamate. The HisF subunit catalyzes the cyclization activity that produces IGP and AICAR from PRFAR using the ammonia provided by the HisH subunit. This Salinispora arenicola (strain CNS-205) protein is Imidazole glycerol phosphate synthase subunit HisF.